A 225-amino-acid chain; its full sequence is Phosphoribosylformylglycinamidine synthase subunit PurQ (225 aa).

In terms of domain architecture, Glutamine amidotransferase type-1 spans 4 to 225 (RIGVITFPGT…LSVLDTLVTA (222 aa)). The Nucleophile role is filled by C87. Active-site residues include H196 and E198.

Part of the FGAM synthase complex composed of 1 PurL, 1 PurQ and 2 PurS subunits.

It is found in the cytoplasm. It carries out the reaction N(2)-formyl-N(1)-(5-phospho-beta-D-ribosyl)glycinamide + L-glutamine + ATP + H2O = 2-formamido-N(1)-(5-O-phospho-beta-D-ribosyl)acetamidine + L-glutamate + ADP + phosphate + H(+). The enzyme catalyses L-glutamine + H2O = L-glutamate + NH4(+). Its pathway is purine metabolism; IMP biosynthesis via de novo pathway; 5-amino-1-(5-phospho-D-ribosyl)imidazole from N(2)-formyl-N(1)-(5-phospho-D-ribosyl)glycinamide: step 1/2. Its function is as follows. Part of the phosphoribosylformylglycinamidine synthase complex involved in the purines biosynthetic pathway. Catalyzes the ATP-dependent conversion of formylglycinamide ribonucleotide (FGAR) and glutamine to yield formylglycinamidine ribonucleotide (FGAM) and glutamate. The FGAM synthase complex is composed of three subunits. PurQ produces an ammonia molecule by converting glutamine to glutamate. PurL transfers the ammonia molecule to FGAR to form FGAM in an ATP-dependent manner. PurS interacts with PurQ and PurL and is thought to assist in the transfer of the ammonia molecule from PurQ to PurL. This is Phosphoribosylformylglycinamidine synthase subunit PurQ from Nocardia farcinica (strain IFM 10152).